We begin with the raw amino-acid sequence, 404 residues long: Propionate kinase (404 aa).

The protein belongs to the acetokinase family. PduW subfamily.

Its subcellular location is the cytoplasm. The enzyme catalyses propanoate + ATP = propanoyl phosphate + ADP. It functions in the pathway polyol metabolism; 1,2-propanediol degradation. In terms of biological role, works with phosphate acetyltransferase (pta) to capture exogenous propionate and regenerate propionyl-CoA during degradation of 1,2-propanediol (1,2-PD). The polypeptide is Propionate kinase (Klebsiella pneumoniae (strain 342)).